Consider the following 909-residue polypeptide: SCY1-like protein 2 B (909 aa).

Positions 39-343 (YELLDQIGSA…ALDFTGSNFF (305 aa)) constitute a Protein kinase domain. HEAT repeat units lie at residues 311-348 (SIPS…SDAR), 350-382 (RALR…DFDS), 383-401 (RVLR…RNLV), 402-439 (LQPI…TASG), 465-502 (VLPL…VVRQ), 499-537 (VVRQ…TLDK), and 578-617 (FTAE…KIEE). Disordered stretches follow at residues 624–772 (NDSG…VAST) and 804–909 (SASL…LDLL). Composition is skewed to polar residues over residues 638–648 (NGLQFQSSTQI), 678–712 (PASS…TAPT), 724–747 (RQSS…TSFA), 804–828 (SASL…QDPL), and 835–852 (KQSQ…NNQK).

Belongs to the protein kinase superfamily. In terms of assembly, interacts with VTI11, VTI12 and CHC1. In terms of tissue distribution, expressed in roots, seedlings, leaves, stems, flowers, and, at low levels, in siliques.

Its subcellular location is the golgi apparatus membrane. The protein resides in the golgi apparatus. It localises to the trans-Golgi network membrane. It is found in the prevacuolar compartment membrane. Probably inactive kinase. Component of the AP2-containing clathrin coat that regulates clathrin-dependent trafficking at plasma membrane, TGN and endosomal system. Together with SCYL2B, required for cell growth, plant growth and development. Essential for polarized root hair development probably by mediating the root hair tip localization of cellulose synthase-like D3 (CSLD3). This is SCY1-like protein 2 B from Arabidopsis thaliana (Mouse-ear cress).